A 258-amino-acid polypeptide reads, in one-letter code: Nucleoprotein (258 aa).

Belongs to the tospovirus nucleocapsid protein family. In terms of assembly, homotrimer. Binds the viral genomic RNA.

It localises to the virion. Its function is as follows. Encapsidates the genome protecting it from nucleases. The encapsidated genomic RNA is termed the nucleocapsid (NC) and serves as template for transcription and replication. The NC have a helical organization. This chain is Nucleoprotein (N), found in Frankliniella occidentalis (Western flower thrips).